The chain runs to 559 residues: Serine/threonine-protein kinase bur1 (559 aa).

The Protein kinase domain maps to 40–341; that stretch reads YEVLGKLGEG…AIDALNHPYF (302 aa). Residues 46 to 54 and lysine 69 each bind ATP; that span reads LGEGTFGEV. The active-site Proton acceptor is the aspartate 171. The segment covering 359–372 has biased composition (basic and acidic residues); it reads SHEFDRRKFQDRKA. The disordered stretch occupies residues 359–559; that stretch reads SHEFDRRKFQ…GRDRDAYARR (201 aa). Residues 400 to 414 show a composition bias toward gly residues; it reads GRDGYGGGGRNGANG. Basic and acidic residues-rich tracts occupy residues 457–467, 491–534, and 543–559; these read DHTDGYRDRPP, YDRD…DSRT, and PVRD…YARR.

The protein belongs to the protein kinase superfamily. CMGC Ser/Thr protein kinase family. CDC2/CDKX subfamily.

It localises to the nucleus. It carries out the reaction L-seryl-[protein] + ATP = O-phospho-L-seryl-[protein] + ADP + H(+). The enzyme catalyses L-threonyl-[protein] + ATP = O-phospho-L-threonyl-[protein] + ADP + H(+). The catalysed reaction is [DNA-directed RNA polymerase] + ATP = phospho-[DNA-directed RNA polymerase] + ADP + H(+). Functionally, serine/threonine-protein kinase involved in transcription regulation. Phosphorylates the mus-8/ubc2 ubiquitin-conjugating enzyme (E2), leading to monoubiquitination of histone H2B and the silencing of telomeric-associated genes. Also required for histone H3 methylation. Necessary for the recovery from pheromone-induced growth arrest in the cell cycle G1 phase. The chain is Serine/threonine-protein kinase bur1 (stk-1) from Neurospora crassa (strain ATCC 24698 / 74-OR23-1A / CBS 708.71 / DSM 1257 / FGSC 987).